The primary structure comprises 126 residues: 14 kDa phosphohistidine phosphatase (126 aa).

Lys-22 is a binding site for substrate. The active-site Proton acceptor is His-54. Ser-95–Gly-97 is a binding site for substrate.

This sequence belongs to the janus family. Monomer.

The protein localises to the cytoplasm. The enzyme catalyses N(pros)-phospho-L-histidyl-[protein] + H2O = L-histidyl-[protein] + phosphate. It carries out the reaction N(tele)-phospho-L-histidyl-[protein] + H2O = L-histidyl-[protein] + phosphate. Its function is as follows. Exhibits phosphohistidine phosphatase activity. This Sus scrofa (Pig) protein is 14 kDa phosphohistidine phosphatase (PHPT1).